We begin with the raw amino-acid sequence, 92 residues long: Small ribosomal subunit protein uS19 (92 aa).

Belongs to the universal ribosomal protein uS19 family.

In terms of biological role, protein S19 forms a complex with S13 that binds strongly to the 16S ribosomal RNA. The polypeptide is Small ribosomal subunit protein uS19 (Ruegeria pomeroyi (strain ATCC 700808 / DSM 15171 / DSS-3) (Silicibacter pomeroyi)).